The primary structure comprises 390 residues: F-box/kelch-repeat protein At3g06570 (390 aa).

The F-box domain maps to 23-69 (SASFQSLPDDLILSIVARVPRLYHRTVSLVCKSFRSLLVSPELYKAR). Kelch repeat units lie at residues 140-183 (DIYN…VLDR), 185-234 (IFVV…CRTA), and 236-281 (IDGK…QIHN).

This chain is F-box/kelch-repeat protein At3g06570, found in Arabidopsis thaliana (Mouse-ear cress).